We begin with the raw amino-acid sequence, 324 residues long: Protein FAM228B (324 aa).

It belongs to the FAM228 family.

The sequence is that of Protein FAM228B (FAM228B) from Homo sapiens (Human).